The chain runs to 790 residues: Cadherin-18 (790 aa).

The signal sequence occupies residues 1 to 24; sequence MKITSTSCICPVLVCLCFVQRCYG. Residues 25-53 constitute a propeptide that is removed on maturation; that stretch reads TAHHSSIKVMRNQTKHIEGETEVHHRPKR. Asn36 carries N-linked (GlcNAc...) asparagine glycosylation. Cadherin domains lie at 54-159, 160-268, 269-383, 384-486, and 487-608; these read GWVW…APKF, TDGP…PPRF, PQKH…PPLF, SMPS…DNPP, and ELAR…FLSS. The Extracellular portion of the chain corresponds to 54–608; the sequence is GWVWNQFFVL…TCHAEAFLSS (555 aa). An N-linked (GlcNAc...) asparagine glycan is attached at Asn255. Residues Asn455 and Asn536 are each glycosylated (N-linked (GlcNAc...) asparagine). Residues 609–636 traverse the membrane as a helical segment; that stretch reads AGLSTGALIAILLCVLILLAIVVLFITL. Residues 637 to 790 lie on the Cytoplasmic side of the membrane; it reads RRSKKEPLII…YGEIESERTT (154 aa). Position 786 is a phosphoserine (Ser786).

Its subcellular location is the cell membrane. Functionally, cadherins are calcium-dependent cell adhesion proteins. They preferentially interact with themselves in a homophilic manner in connecting cells; cadherins may thus contribute to the sorting of heterogeneous cell types. In Homo sapiens (Human), this protein is Cadherin-18 (CDH18).